We begin with the raw amino-acid sequence, 555 residues long: Glutamine--tRNA ligase (555 aa).

Residues 34 to 44 carry the 'HIGH' region motif; that stretch reads PEPNGYLHIGH. ATP contacts are provided by residues 35–37 and 41–47; these read EPN and HIGHAKS. Asp-67 and Tyr-212 together coordinate L-glutamine. ATP-binding positions include Thr-231, 261-262, and 269-271; these read RL and MSK. The 'KMSKS' region motif lies at 268-272; the sequence is IMSKR.

The protein belongs to the class-I aminoacyl-tRNA synthetase family. In terms of assembly, monomer.

Its subcellular location is the cytoplasm. The enzyme catalyses tRNA(Gln) + L-glutamine + ATP = L-glutaminyl-tRNA(Gln) + AMP + diphosphate. The polypeptide is Glutamine--tRNA ligase (Yersinia pseudotuberculosis serotype O:1b (strain IP 31758)).